Here is a 255-residue protein sequence, read N- to C-terminus: Geranylgeranylglyceryl phosphate synthase (255 aa).

The Mg(2+) site is built by Asp31 and Ser60. Residues 179-185, 211-212, and 233-234 each bind sn-glycerol 1-phosphate; these read YLEAGSG, GG, and GT.

Belongs to the GGGP/HepGP synthase family. Group II subfamily. Mg(2+) is required as a cofactor.

The protein localises to the cytoplasm. The enzyme catalyses sn-glycerol 1-phosphate + (2E,6E,10E)-geranylgeranyl diphosphate = sn-3-O-(geranylgeranyl)glycerol 1-phosphate + diphosphate. The protein operates within membrane lipid metabolism; glycerophospholipid metabolism. Its function is as follows. Prenyltransferase that catalyzes the transfer of the geranylgeranyl moiety of geranylgeranyl diphosphate (GGPP) to the C3 hydroxyl of sn-glycerol-1-phosphate (G1P). This reaction is the first ether-bond-formation step in the biosynthesis of archaeal membrane lipids. This Methanothrix thermoacetophila (strain DSM 6194 / JCM 14653 / NBRC 101360 / PT) (Methanosaeta thermophila) protein is Geranylgeranylglyceryl phosphate synthase.